The following is a 356-amino-acid chain: MALQNMDISLSTEQLLQAQAHVWNHMYAFANSMSLKCAIQLGIPDILHKHDHPMTLSQLLKAIPINKEKSQSFQRLMRALVNSNFFIEENSNNQEVCYWLTPASRLLLKGAPLTVAPLVQVVLDPTFTNPWHYMSEWFKHENHATQFEAANGCTFWEKLANKPSMGRFFDEAMSCDSRLVAHVLTKDYKHVIDGIRTLVDVGGGNGTMAKAIVEAVPTMKCTVLDLPHVVAGLESTDKLSYIGGDMFQSIPSADAILLKFIIHDWDDEEGLKILKRCKDAVGIGGKVIIIDVVVGVNHDVDEVLEDQLHFDMAMMSYFNAKERTMNEWEKLISAAGFTSYKLTPAFGVRSLIEAYP.

S-adenosyl-L-methionine is bound by residues Gly-202, Asp-225, Asp-245, Met-246, and Lys-259. The active-site Proton acceptor is His-263.

Belongs to the class I-like SAM-binding methyltransferase superfamily. Cation-independent O-methyltransferase family. COMT subfamily. As to quaternary structure, homodimer. In terms of tissue distribution, specifically expressed in the peltate glandular trichomes on the surface of the young basil leaves.

It carries out the reaction (E)-isoeugenol + S-adenosyl-L-methionine = (E)-isomethyleugenol + S-adenosyl-L-homocysteine + H(+). It participates in aromatic compound metabolism; phenylpropanoid biosynthesis. Its function is as follows. Phenylpropene O-methyltransferase that catalyzes the methylation of the para-4-hydroxyl of chavicol to methylchavicol. Can also convert eugenol to methyleugenol but with less affinity. This is Chavicol O-methyltransferase (CVOMT1) from Ocimum basilicum (Sweet basil).